The sequence spans 296 residues: Cytidine deaminase (296 aa).

2 consecutive CMP/dCMP-type deaminase domains span residues 48–168 (DVDA…FGPV) and 187–296 (QNVN…FIEE). A substrate-binding site is contributed by 89–91 (NME). H102 contributes to the Zn(2+) binding site. The Proton donor role is filled by E104. C129 and C132 together coordinate Zn(2+).

It belongs to the cytidine and deoxycytidylate deaminase family. Homodimer. Requires Zn(2+) as cofactor.

The catalysed reaction is cytidine + H2O + H(+) = uridine + NH4(+). It carries out the reaction 2'-deoxycytidine + H2O + H(+) = 2'-deoxyuridine + NH4(+). In terms of biological role, this enzyme scavenges exogenous and endogenous cytidine and 2'-deoxycytidine for UMP synthesis. This is Cytidine deaminase from Pectobacterium atrosepticum (strain SCRI 1043 / ATCC BAA-672) (Erwinia carotovora subsp. atroseptica).